The chain runs to 704 residues: Elongation factor G 1 (704 aa).

Residues 8 to 290 form the tr-type G domain; sequence ERYRNIGICA…CVVEYMPAPT (283 aa). GTP is bound by residues 17-24, 88-92, and 142-145; these read AHVDAGKT, DTPGH, and NKMD.

Belongs to the TRAFAC class translation factor GTPase superfamily. Classic translation factor GTPase family. EF-G/EF-2 subfamily.

Its subcellular location is the cytoplasm. In terms of biological role, catalyzes the GTP-dependent ribosomal translocation step during translation elongation. During this step, the ribosome changes from the pre-translocational (PRE) to the post-translocational (POST) state as the newly formed A-site-bound peptidyl-tRNA and P-site-bound deacylated tRNA move to the P and E sites, respectively. Catalyzes the coordinated movement of the two tRNA molecules, the mRNA and conformational changes in the ribosome. The polypeptide is Elongation factor G 1 (Pseudoalteromonas translucida (strain TAC 125)).